The following is a 350-amino-acid chain: Protein RecA (350 aa).

67–74 (GPESSGKT) is an ATP binding site.

It belongs to the RecA family.

It localises to the cytoplasm. Can catalyze the hydrolysis of ATP in the presence of single-stranded DNA, the ATP-dependent uptake of single-stranded DNA by duplex DNA, and the ATP-dependent hybridization of homologous single-stranded DNAs. It interacts with LexA causing its activation and leading to its autocatalytic cleavage. The chain is Protein RecA from Baumannia cicadellinicola subsp. Homalodisca coagulata.